The chain runs to 426 residues: L-cysteine:1D-myo-inositol 2-amino-2-deoxy-alpha-D-glucopyranoside ligase (426 aa).

Residue cysteine 45 coordinates Zn(2+). L-cysteinyl-5'-AMP contacts are provided by residues cysteine 45 to threonine 48, threonine 60, and asparagine 83 to threonine 85. Positions isoleucine 47 to histidine 57 match the 'HIGH' region motif. The short motif at glutamate 199 to proline 204 is the 'ERGGDP' region element. Tryptophan 239 lines the L-cysteinyl-5'-AMP pocket. Zn(2+) is bound at residue cysteine 243. Glycine 261–aspartate 263 contributes to the L-cysteinyl-5'-AMP binding site. Zn(2+) is bound at residue histidine 268. Valine 294 lines the L-cysteinyl-5'-AMP pocket. The 'KMSKS' region signature appears at lysine 300–serine 304.

Belongs to the class-I aminoacyl-tRNA synthetase family. MshC subfamily. As to quaternary structure, monomer. Zn(2+) is required as a cofactor.

The enzyme catalyses 1D-myo-inositol 2-amino-2-deoxy-alpha-D-glucopyranoside + L-cysteine + ATP = 1D-myo-inositol 2-(L-cysteinylamino)-2-deoxy-alpha-D-glucopyranoside + AMP + diphosphate + H(+). In terms of biological role, catalyzes the ATP-dependent condensation of GlcN-Ins and L-cysteine to form L-Cys-GlcN-Ins. This is L-cysteine:1D-myo-inositol 2-amino-2-deoxy-alpha-D-glucopyranoside ligase from Clavibacter michiganensis subsp. michiganensis (strain NCPPB 382).